Reading from the N-terminus, the 391-residue chain is UDP-galactose transporter homolog 1 (391 aa).

5 consecutive transmembrane segments (helical) span residues Leu3 to Leu23, Leu52 to Val72, Tyr126 to Ile147, Tyr178 to Pro198, and Ala207 to Gly227. A glycan (N-linked (GlcNAc...) asparagine) is linked at Asn230. 4 helical membrane passes run Met250–Ile270, Asp298–Glu318, Leu323–Val343, and Glu347–Ala367.

Belongs to the nucleotide-sugar transporter family. SLC35B subfamily.

The protein resides in the endoplasmic reticulum membrane. Functionally, may be involved in specific transport of UDP-Gal from the cytosol to the Golgi lumen. Involved in the maintenance of optimal conditions for the folding of secretory pathway proteins in the endoplasmic reticulum. This chain is UDP-galactose transporter homolog 1 (HUT1), found in Mycosarcoma maydis (Corn smut fungus).